The following is a 222-amino-acid chain: Deoxyribose-phosphate aldolase (222 aa).

D93 (proton donor/acceptor) is an active-site residue. K156 serves as the catalytic Schiff-base intermediate with acetaldehyde. The active-site Proton donor/acceptor is K186.

Belongs to the DeoC/FbaB aldolase family. DeoC type 1 subfamily.

It localises to the cytoplasm. The enzyme catalyses 2-deoxy-D-ribose 5-phosphate = D-glyceraldehyde 3-phosphate + acetaldehyde. It participates in carbohydrate degradation; 2-deoxy-D-ribose 1-phosphate degradation; D-glyceraldehyde 3-phosphate and acetaldehyde from 2-deoxy-alpha-D-ribose 1-phosphate: step 2/2. Functionally, catalyzes a reversible aldol reaction between acetaldehyde and D-glyceraldehyde 3-phosphate to generate 2-deoxy-D-ribose 5-phosphate. This Corynebacterium glutamicum (strain ATCC 13032 / DSM 20300 / JCM 1318 / BCRC 11384 / CCUG 27702 / LMG 3730 / NBRC 12168 / NCIMB 10025 / NRRL B-2784 / 534) protein is Deoxyribose-phosphate aldolase.